A 952-amino-acid chain; its full sequence is Leucine--tRNA ligase (952 aa).

A 'HIGH' region motif is present at residues 65–76 (PYPSGAGLHVGH). The 'KMSKS' region signature appears at 727-731 (KMGKS). ATP is bound at residue K730.

Belongs to the class-I aminoacyl-tRNA synthetase family.

Its subcellular location is the cytoplasm. It catalyses the reaction tRNA(Leu) + L-leucine + ATP = L-leucyl-tRNA(Leu) + AMP + diphosphate. This Salinispora arenicola (strain CNS-205) protein is Leucine--tRNA ligase.